Here is a 446-residue protein sequence, read N- to C-terminus: tRNA modification GTPase MnmE (446 aa).

Arg23, Glu81, and Lys120 together coordinate (6S)-5-formyl-5,6,7,8-tetrahydrofolate. In terms of domain architecture, TrmE-type G spans 216 to 370 (GFKVAIIGKP…LIKELELILD (155 aa)). Asn226 is a binding site for K(+). GTP-binding positions include 226-231 (NVGKSS), 245-251 (SDIAGTT), and 270-273 (DTAG). Residue Ser230 coordinates Mg(2+). Residues Ser245, Ile247, and Thr250 each contribute to the K(+) site. Position 251 (Thr251) interacts with Mg(2+). Lys446 is a (6S)-5-formyl-5,6,7,8-tetrahydrofolate binding site.

It belongs to the TRAFAC class TrmE-Era-EngA-EngB-Septin-like GTPase superfamily. TrmE GTPase family. In terms of assembly, homodimer. Heterotetramer of two MnmE and two MnmG subunits. The cofactor is K(+).

The protein resides in the cytoplasm. Functionally, exhibits a very high intrinsic GTPase hydrolysis rate. Involved in the addition of a carboxymethylaminomethyl (cmnm) group at the wobble position (U34) of certain tRNAs, forming tRNA-cmnm(5)s(2)U34. This chain is tRNA modification GTPase MnmE, found in Aliarcobacter butzleri (strain RM4018) (Arcobacter butzleri).